A 368-amino-acid polypeptide reads, in one-letter code: Homoserine O-acetyltransferase (368 aa).

Residues 44–350 form the AB hydrolase-1 domain; sequence NAILVAHAWT…AYGHDAFLLE (307 aa). Ser150 acts as the Nucleophile in catalysis. A substrate-binding site is contributed by Arg217. Catalysis depends on residues Asp311 and His344. Asp345 is a substrate binding site.

This sequence belongs to the AB hydrolase superfamily. MetX family. Homodimer.

The protein resides in the cytoplasm. The catalysed reaction is L-homoserine + acetyl-CoA = O-acetyl-L-homoserine + CoA. The protein operates within amino-acid biosynthesis; L-methionine biosynthesis via de novo pathway; O-acetyl-L-homoserine from L-homoserine: step 1/1. Functionally, transfers an acetyl group from acetyl-CoA to L-homoserine, forming acetyl-L-homoserine. The chain is Homoserine O-acetyltransferase from Geobacter sulfurreducens (strain ATCC 51573 / DSM 12127 / PCA).